Here is a 325-residue protein sequence, read N- to C-terminus: MRIVFFGTPTFAVPTLKKLLANPDIEIITVVTQPDKRRGRGNQLIPSPVKQIAIEQQIPVLQPKSVKKNARTLDFLRQSRADAFVVVAYGQILSPEILEMPRLGCINVHGSILPKYRGAAPVQWCIARGEKETGITTMLMDAGMDTGPMLLKAYTPIALFDNAEQVGATLGQMGADLLLETLSKLDRAEITPIPQNNDDATYAPLIQKSDYLIHWQDSGRRIHDRVRGFYPHALTTFRGQPLKVMATIPLEDLGQLPPELQTKDLSHLSGEVGSIVALWKNFGPVVQTGEGLLLLKEVQLSGKSPRSGGDLVNGSRLTIGEIFVQ.

111-114 (SILP) serves as a coordination point for (6S)-5,6,7,8-tetrahydrofolate.

This sequence belongs to the Fmt family.

The catalysed reaction is L-methionyl-tRNA(fMet) + (6R)-10-formyltetrahydrofolate = N-formyl-L-methionyl-tRNA(fMet) + (6S)-5,6,7,8-tetrahydrofolate + H(+). Attaches a formyl group to the free amino group of methionyl-tRNA(fMet). The formyl group appears to play a dual role in the initiator identity of N-formylmethionyl-tRNA by promoting its recognition by IF2 and preventing the misappropriation of this tRNA by the elongation apparatus. In Microcystis aeruginosa (strain NIES-843 / IAM M-2473), this protein is Methionyl-tRNA formyltransferase.